The primary structure comprises 486 residues: Serralysin (486 aa).

His187 contributes to the Zn(2+) binding site. Residue Glu188 is part of the active site. The Zn(2+) site is built by His191 and His197. 8 residues coordinate Ca(2+): Arg266, Asp269, Asp298, Gly300, Gly301, Asp303, Thr340, and Glu342. Hemolysin-type calcium-binding repeat units follow at residues Ile345–Leu362 and Lys363–Leu380.

This sequence belongs to the peptidase M10B family. Zn(2+) serves as cofactor. The cofactor is Ca(2+).

The protein resides in the secreted. It catalyses the reaction Preferential cleavage of bonds with hydrophobic residues in P1'.. The chain is Serralysin (prtA1) from Photorhabdus luminescens (Xenorhabdus luminescens).